We begin with the raw amino-acid sequence, 390 residues long: Peroxisomal sarcosine oxidase (390 aa).

An FAD-binding site is contributed by 9-39 (DAIVIGAGIQGCFTAYHLAKHSKSVLLLEQF). An N6-acetyllysine mark is found at Lys126 and Lys287. Position 319 is an S-8alpha-FAD cysteine (Cys319). Positions 388–390 (AHL) match the Microbody targeting signal motif.

It belongs to the MSOX/MTOX family. The cofactor is FAD. As to expression, kidney and liver.

Its subcellular location is the peroxisome. The catalysed reaction is sarcosine + O2 + H2O = formaldehyde + glycine + H2O2. The enzyme catalyses L-pipecolate + O2 = L-1-piperideine-6-carboxylate + H2O2 + H(+). Its function is as follows. Metabolizes sarcosine, L-pipecolic acid and L-proline. This Mus musculus (Mouse) protein is Peroxisomal sarcosine oxidase (Pipox).